The primary structure comprises 152 residues: Ribosome maturation factor RimP (152 aa).

Belongs to the RimP family.

The protein localises to the cytoplasm. In terms of biological role, required for maturation of 30S ribosomal subunits. This is Ribosome maturation factor RimP from Aeromonas hydrophila subsp. hydrophila (strain ATCC 7966 / DSM 30187 / BCRC 13018 / CCUG 14551 / JCM 1027 / KCTC 2358 / NCIMB 9240 / NCTC 8049).